A 234-amino-acid polypeptide reads, in one-letter code: Heme-copper oxidase subunit 2 (234 aa).

2 helical membrane passes run 13 to 33 (LFLL…AFFI) and 72 to 92 (LLFV…DETL). Cu cation-binding residues include His151, Cys188, Cys192, and His196.

This sequence belongs to the cytochrome c oxidase subunit 2 family.

The protein localises to the cell membrane. In Aeropyrum pernix (strain ATCC 700893 / DSM 11879 / JCM 9820 / NBRC 100138 / K1), this protein is Heme-copper oxidase subunit 2 (aoxA).